Here is a 2032-residue protein sequence, read N- to C-terminus: Cytoskeleton-associated protein 5 (2032 aa).

TOG stretches follow at residues 1 to 223 (MGDD…KLPT), 268 to 502 (YELL…LVHG), and 588 to 817 (SIEV…GQSP). The residue at position 48 (K48) is an N6-acetyllysine. HEAT repeat units follow at residues 159-197 (IISL…WNRD), 356-394 (GQYA…TTTL), and 434-472 (KSLL…VVGE). The segment at 501–579 (HGKKSGLATE…GTKNKKGLET (79 aa)) is disordered. The stretch at 750 to 788 (ELNVKAFISNVKTALAATNPAVRTSAITLLGVMYLYVGP) is one HEAT 4 repeat. A disordered region spans residues 811–848 (KMQGQSPPAPTRGIAKHSTSATDEGEDGEEPGEGGNDV). Residue S816 is modified to Phosphoserine. Acidic residues predominate over residues 833–842 (DEGEDGEEPG). TOG regions lie at residues 853 to 1081 (PRIE…ANMP) and 1193 to 1428 (IEQL…KRPS). HEAT repeat units follow at residues 855–893 (IEIS…EAKF), 936–974 (RQHV…QTGM), and 1013–1051 (PTDL…HLGY). Low complexity predominate over residues 1078 to 1095 (ANMPSKPAAPAKAMSKPM). The tract at residues 1078–1156 (ANMPSKPAAP…KTTLKEDDDK (79 aa)) is disordered. 3 HEAT repeats span residues 1284 to 1322 (ENEA…VYPA), 1324 to 1357 (KMFP…SYGM), and 1361 to 1399 (QPTP…VHGD). A disordered region spans residues 1420–1459 (IKRSAKRPSAAPVKQAEEKPQRTQNINSNANMLRKGPAED). Positions 1441 to 1450 (RTQNINSNAN) are enriched in polar residues. S1469 carries the phosphoserine modification. Positions 1801–1822 (SMDQTGSKSDKETEKGASRIDE) are disordered. Residues 1808–1822 (KSDKETEKGASRIDE) are compositionally biased toward basic and acidic residues. S1861 carries the post-translational modification Phosphoserine. 2 disordered regions span residues 1893–1926 (SKGR…GNTN) and 1948–2032 (LDNT…SSRK). A compositionally biased stretch (low complexity) spans 1909–1921 (VTCVPTPTSTVSS). Residues 1932–1957 (PSVYLERLKILRQRCGLDNTKQDDRP) are interaction with TACC3. The span at 1972–1983 (ASSTDMLHSKLS) shows a compositional bias: polar residues. Residues 1984 to 1997 (QLRESREQHQHSDL) show a composition bias toward basic and acidic residues. Residues 2002-2015 (THSAGTMTSSSSTT) are compositionally biased toward low complexity. Positions 2018-2032 (DDLKKRLERIKSSRK) are enriched in basic and acidic residues.

It belongs to the TOG/XMAP215 family. Interacts with TACC1. Interacts with HNRNPA2B1. Interacts with TACC3 independently of clathrin. Interacts with TACC3 and clathrin forming the TACC3/ch-TOG/clathrin complex located at spindle inter-microtubules bridges. Interacts with NDC80; indicative for an association with the NDC80 complex. Interacts with SLAIN2. Interacts with SLAIN1.

Its subcellular location is the cytoplasm. It localises to the cytoskeleton. It is found in the microtubule organizing center. The protein resides in the centrosome. The protein localises to the spindle pole. Its subcellular location is the spindle. It localises to the chromosome. It is found in the centromere. The protein resides in the kinetochore. In terms of biological role, binds to the plus end of microtubules and regulates microtubule dynamics and microtubule organization. Acts as a processive microtubule polymerase. Promotes cytoplasmic microtubule nucleation and elongation. Plays a major role in organizing spindle poles. In spindle formation protects kinetochore microtubules from depolymerization by KIF2C and has an essential role in centrosomal microtubule assembly independently of KIF2C activity. Contributes to centrosome integrity. Acts as a component of the TACC3/ch-TOG/clathrin complex proposed to contribute to stabilization of kinetochore fibers of the mitotic spindle by acting as inter-microtubule bridge. The TACC3/ch-TOG/clathrin complex is required for the maintenance of kinetochore fiber tension. Enhances the strength of NDC80 complex-mediated kinetochore-tip microtubule attachments. In Mus musculus (Mouse), this protein is Cytoskeleton-associated protein 5.